A 436-amino-acid polypeptide reads, in one-letter code: MYHPRELYPSLGTGYRLGHPQPGADSTFPPALTEGYRYPDLDTSKLDCFLSGIEAAPHTLAAAAPLPLLPSALGPETAPPPPEALHSLPGVSLSLENQELWKEFSAVGTEMIITKAGRRMFPACRVSVTGLDPEARYLFLLDVVPVDGARYRWQGQHWEPSGKAEPRLPDRVYIHPDSPATGAHWMRQPVSFHRVKLTNSTLDPHGHLILHSMHKYQPRIHLVRATQLCSQHWGGVASFRFPETTFISVTAYQNPRITQLKIAANPFAKGFRENGRNCKRERDARVKRKLRGPEPVATEACGSGDTPGGPCDSTLGGDIRDSDPEQAPTPQEAASASAPPCGGPSAEAYLLHPAAFHGAPSHLPARTPSFAEAPDPGRPAPYSAAFLDLQPGPGGSAYQAAPSVPSFAPHFIQGGPFPLPYPGPGGYLDMGSKPMY.

The segment at residues 100-273 is a DNA-binding region (T-box); the sequence is LWKEFSAVGT…ANPFAKGFRE (174 aa). Positions 274 to 284 are enriched in basic and acidic residues; sequence NGRNCKRERDA. Disordered regions lie at residues 274–344 and 360–383; these read NGRN…CGGP and PSHLPARTPSFAEAPDPGRPAPYS. Over residues 332 to 344 the composition is skewed to low complexity; the sequence is EAASASAPPCGGP.

The protein localises to the nucleus. Functionally, T-box transcription factor that plays an essential role in the determination of the fate of axial stem cells: neural vs mesodermal. Acts in part by down-regulating, a specific enhancer (N1) of SOX2, to inhibit neural development. Seems to play also an essential role in left/right axis determination and acts through effects on Notch signaling around the node as well as through an effect on the morphology and motility of the nodal cilia. This Mus musculus (Mouse) protein is T-box transcription factor TBX6 (Tbx6).